The primary structure comprises 248 residues: Probable transcriptional regulatory protein BBta_6910 (248 aa).

Belongs to the TACO1 family.

The protein resides in the cytoplasm. In Bradyrhizobium sp. (strain BTAi1 / ATCC BAA-1182), this protein is Probable transcriptional regulatory protein BBta_6910.